A 245-amino-acid chain; its full sequence is Acetylglutamate kinase (245 aa).

Substrate is bound by residues 41–42 (GG), Arg-63, and Asn-156.

The protein belongs to the acetylglutamate kinase family. ArgB subfamily.

The protein localises to the cytoplasm. It carries out the reaction N-acetyl-L-glutamate + ATP = N-acetyl-L-glutamyl 5-phosphate + ADP. Its pathway is amino-acid biosynthesis; L-arginine biosynthesis; N(2)-acetyl-L-ornithine from L-glutamate: step 2/4. Catalyzes the ATP-dependent phosphorylation of N-acetyl-L-glutamate. The sequence is that of Acetylglutamate kinase from Streptococcus gordonii (strain Challis / ATCC 35105 / BCRC 15272 / CH1 / DL1 / V288).